Reading from the N-terminus, the 89-residue chain is Snake venom serine protease rhinocerase (89 aa).

Residues 1 to 89 (VIGGAECDIN…KVFDYIPWIK (89 aa)) enclose the Peptidase S1 domain. Asp-45 functions as the Charge relay system in the catalytic mechanism. Cys-64 and Cys-69 are joined by a disulfide.

This sequence belongs to the peptidase S1 family. Snake venom subfamily. In terms of processing, glycosylated. As to expression, expressed by the venom gland.

The protein resides in the secreted. With respect to regulation, inhibited by PMSF. Not inhibited by benzamidine. In terms of biological role, snake venom serine protease that cleaves fibrinogen alpha and beta chains (FGA and FGB), but not gamma chains. Exhibits fibrinolytic and kininogenolytic. Preferentially cleaves after Arg and Lys residues. The protein is Snake venom serine protease rhinocerase of Bitis rhinoceros (West African gaboon viper).